Consider the following 128-residue polypeptide: uncharacterized protein (128 aa).

A run of 2 helical transmembrane segments spans residues 45–65 and 95–115; these read GYFH…LFPF and FMSH…LSCF.

The protein localises to the membrane. This is an uncharacterized protein from Saccharomyces cerevisiae (strain ATCC 204508 / S288c) (Baker's yeast).